A 201-amino-acid chain; its full sequence is Akirin (201 aa).

The interval 1-133 (MACATLKRAL…PRRPDSPQNL (133 aa)) is disordered. The Nuclear localization signal motif lies at 20–25 (PKRRRC). Residues serine 39 and serine 41 each carry the phosphoserine modification. Polar residues-rich tracts occupy residues 44–57 (GPST…TPSN) and 65–75 (EPSPFSESSLA). Serine 67 is subject to Phosphoserine. The segment covering 112–122 (SESSGSEMGPE) has biased composition (low complexity). 2 positions are modified to phosphoserine: serine 123 and serine 129.

The protein belongs to the akirin family. As to quaternary structure, interacts with dmap1. Interacts with bap60 and rel; interaction is immune stimulation-dependent; activates selected rel target gene promoters. Interacts with bap55; interaction is immune stimulation-dependent. Interacts with twi. In terms of processing, polyubiquitinated via 'Lys-63'-linked ubiquitin by Hyd, promoting interaction with rel. In terms of tissue distribution, ubiquitous.

It localises to the nucleus. Molecular adapter that acts as a bridge between a variety of multiprotein complexes, and which is required for embryonic development and for normal innate immune response. Acts as a regulator of embryonic myogenesis by bridging Twist (twi) with the SWI/SNF-like Brahma complex, promoting expression of twi-regulated genes during myogenesis. Effector of immune deficiency pathway (Imd) by acting either downstream of, or at the level of, the NF-kappa-B factor Relish (Rel). Acts by bridging the NF-kappa-B factor Rel and the Brahma complex through bap60 interaction, leading to activation a subset of NF-kappa-B factor Relish (Rel) effector genes. Not part of the Toll pathway. Required for the formation of the heart by promoting expression ot tinman (tin). This Drosophila melanogaster (Fruit fly) protein is Akirin.